Here is a 188-residue protein sequence, read N- to C-terminus: PRA1 family protein 3 (188 aa).

Met-1 is subject to N-acetylmethionine. The Cytoplasmic segment spans residues 1–35 (MDVNLAPLRAWDDFFPGSDRFARPDFRDISKWNNR). The next 2 membrane-spanning stretches (helical) occupy residues 36–56 (VVSN…MMIS) and 57–77 (VVGF…VLVF). The Cytoplasmic segment spans residues 78 to 92 (TGFVWAAHNKDILRR). A run of 2 helical transmembrane segments spans residues 93 to 113 (MKKQ…YFLI) and 115 to 135 (MFGG…LMFI). Residues 103–117 (MVVMLASYFLISMFG) are required for homodimer formation and heterodimer formation with ARL6IP1. At 136–188 (HASLRLRNLKNKLENKMEGIGLKKTPMGIILDALEQQEDSINKFADYISKARE) the chain is on the cytoplasmic side. The interval 136–188 (HASLRLRNLKNKLENKMEGIGLKKTPMGIILDALEQQEDSINKFADYISKARE) is targeting to endoplasmic reticulum membrane.

Belongs to the PRA1 family. In terms of assembly, homodimer. Heterodimer with ARL6IP1. Forms multimers. Interacts with ARL6. Interacts with prenylated RAB1A and RAB3A. Interacts with SLC1A1/EAAC1. Interacts with RTN2 (via first transmembrane domain). Does not interact with VAMP1, VAMP2 or VAMP3. In terms of tissue distribution, ubiquitous. Most abundant in heart and brain. In the embryonic brain cortex, expressed in neurons and astrocytes.

Its subcellular location is the endoplasmic reticulum membrane. The protein localises to the cell membrane. The protein resides in the cytoplasm. It is found in the cytoskeleton. In terms of biological role, regulates intracellular concentrations of taurine and glutamate. Negatively modulates SLC1A1/EAAC1 glutamate transport activity by decreasing its affinity for glutamate in a PKC activity-dependent manner. Plays a role in the retention of SLC1A1/EAAC1 in the endoplasmic reticulum. In Rattus norvegicus (Rat), this protein is PRA1 family protein 3 (Arl6ip5).